The following is a 376-amino-acid chain: tRNA 2-selenouridine synthase (376 aa).

Residues 15 to 138 (FVAGKPLIDL…MRQYLIGVIE (124 aa)) form the Rhodanese domain. C98 serves as the catalytic S-selanylcysteine intermediate.

The protein belongs to the SelU family. As to quaternary structure, monomer.

The enzyme catalyses 5-methylaminomethyl-2-thiouridine(34) in tRNA + selenophosphate + (2E)-geranyl diphosphate + H2O + H(+) = 5-methylaminomethyl-2-selenouridine(34) in tRNA + (2E)-thiogeraniol + phosphate + diphosphate. It carries out the reaction 5-methylaminomethyl-2-thiouridine(34) in tRNA + (2E)-geranyl diphosphate = 5-methylaminomethyl-S-(2E)-geranyl-thiouridine(34) in tRNA + diphosphate. The catalysed reaction is 5-methylaminomethyl-S-(2E)-geranyl-thiouridine(34) in tRNA + selenophosphate + H(+) = 5-methylaminomethyl-2-(Se-phospho)selenouridine(34) in tRNA + (2E)-thiogeraniol. It catalyses the reaction 5-methylaminomethyl-2-(Se-phospho)selenouridine(34) in tRNA + H2O = 5-methylaminomethyl-2-selenouridine(34) in tRNA + phosphate. In terms of biological role, involved in the post-transcriptional modification of the uridine at the wobble position (U34) of tRNA(Lys), tRNA(Glu) and tRNA(Gln). Catalyzes the conversion of 2-thiouridine (S2U-RNA) to 2-selenouridine (Se2U-RNA). Acts in a two-step process involving geranylation of 2-thiouridine (S2U) to S-geranyl-2-thiouridine (geS2U) and subsequent selenation of the latter derivative to 2-selenouridine (Se2U) in the tRNA chain. In Shewanella oneidensis (strain ATCC 700550 / JCM 31522 / CIP 106686 / LMG 19005 / NCIMB 14063 / MR-1), this protein is tRNA 2-selenouridine synthase.